The following is a 419-amino-acid chain: Enolase (419 aa).

Q161 provides a ligand contact to (2R)-2-phosphoglycerate. The active-site Proton donor is the E205. Mg(2+) is bound by residues D240, E283, and D309. 4 residues coordinate (2R)-2-phosphoglycerate: K334, R363, S364, and K385. The Proton acceptor role is filled by K334.

Belongs to the enolase family. It depends on Mg(2+) as a cofactor.

It localises to the cytoplasm. The protein localises to the secreted. It is found in the cell surface. The enzyme catalyses (2R)-2-phosphoglycerate = phosphoenolpyruvate + H2O. The protein operates within carbohydrate degradation; glycolysis; pyruvate from D-glyceraldehyde 3-phosphate: step 4/5. Catalyzes the reversible conversion of 2-phosphoglycerate (2-PG) into phosphoenolpyruvate (PEP). It is essential for the degradation of carbohydrates via glycolysis. The chain is Enolase from Saccharolobus islandicus (strain L.S.2.15 / Lassen #1) (Sulfolobus islandicus).